The primary structure comprises 747 residues: AMP deaminase 1 (747 aa).

Thr-81 carries the post-translational modification Phosphothreonine. Ser-85 carries the post-translational modification Phosphoserine. A Phosphotyrosine modification is found at Tyr-216. Zn(2+)-binding residues include His-303 and His-305. Residues His-305 and 374 to 379 (KFNDKY) contribute to the substrate site. Ser-441 is modified (phosphoserine). Position 572 (His-572) interacts with Zn(2+). Glu-575 contacts substrate. The active-site Proton acceptor is the His-594. Asp-649 is a binding site for Zn(2+). A substrate-binding site is contributed by 650–653 (DPMQ).

The protein belongs to the metallo-dependent hydrolases superfamily. Adenosine and AMP deaminases family. As to quaternary structure, homotetramer. The cofactor is Zn(2+).

It catalyses the reaction AMP + H2O + H(+) = IMP + NH4(+). The protein operates within purine metabolism; IMP biosynthesis via salvage pathway; IMP from AMP: step 1/1. AMP deaminase plays a critical role in energy metabolism. The protein is AMP deaminase 1 of Homo sapiens (Human).